The following is a 310-amino-acid chain: MKQLSIVILLLSIVYTTKPHPTQISKKLGDDATLSCNRNNTHGYLVMSSWYKKPDSIILLAAKNDVVYFDDYTADKVSYDSPYDTLATIITIKSLTSADAGTYICAFFITSTNDTDKIDYEEYFIDLVVNPANVSTIDAILSGSTTQQDIISHTEEQHDSDTTICTSESTTQISETSESTTSSQISETSESTSYGVEDDTQYNVTTDTTDNSDTIGTLPEEDTTTISTTIHKTTTTDDNLYDTYNEPISVSSSIPTTVESVTISTTKYTTSDFIEIFGIVSLILLLAVAIFCIIYYFCSGRSRKQETNIL.

Positions 1–16 are cleaved as a signal peptide; that stretch reads MKQLSIVILLLSIVYT. The Virion surface segment spans residues 17–275; sequence TKPHPTQISK…TKYTTSDFIE (259 aa). The 103-residue stretch at 19-121 folds into the Ig-like V-type domain; it reads PHPTQISKKL…TNDTDKIDYE (103 aa). Cys36 and Cys105 form a disulfide bridge. N-linked (GlcNAc...) asparagine; by host glycosylation is found at Asn39, Asn113, and Asn133. The segment at 153-195 is disordered; the sequence is HTEEQHDSDTTICTSESTTQISETSESTTSSQISETSESTSYG. Positions 162–193 are enriched in low complexity; that stretch reads TTICTSESTTQISETSESTTSSQISETSESTS. The N-linked (GlcNAc...) asparagine; by host glycan is linked to Asn203. The helical transmembrane segment at 276-300 threads the bilayer; sequence IFGIVSLILLLAVAIFCIIYYFCSG. Residues 301–310 lie on the Intravirion side of the membrane; sequence RSRKQETNIL.

In terms of assembly, heterodimerizes with K2. The heterodimer A56/K2 interacts with components of the entry fusion complex A16 and G9. Interacts with K2 protein. Heterodimer with C3/VPC protein; disulfide-linked. Glycosylated; contains phosphate and sulfate-substituted glycans. O-glycosylation is required for hemagglutination and hemadsorption activities of infected cell membranes.

The protein localises to the virion membrane. Its subcellular location is the host membrane. Its function is as follows. Prevents cell to cell fusion by interacting with and directing the viral K2 protein on the host plasma membrane. The A56-K2 complex associates with components of the entry fusion complex (EFC) presumably to avoid superinfection and syncytium formation. Via its interaction with C3/VCP protein, protects the infected cell and probably also the extracellular enveloped virus from complement attack. This is Protein A56 (HA) from Raccoon poxvirus (RCN).